The chain runs to 283 residues: Type III pantothenate kinase (283 aa).

ATP is bound at residue 9 to 16 (DIGNTRLK). Residues Tyr116 and 123 to 126 (GVDR) contribute to the substrate site. Asp125 serves as the catalytic Proton acceptor. Thr149 lines the ATP pocket. Thr211 is a binding site for substrate.

This sequence belongs to the type III pantothenate kinase family. As to quaternary structure, homodimer. NH4(+) serves as cofactor. The cofactor is K(+).

The protein resides in the cytoplasm. It carries out the reaction (R)-pantothenate + ATP = (R)-4'-phosphopantothenate + ADP + H(+). The protein operates within cofactor biosynthesis; coenzyme A biosynthesis; CoA from (R)-pantothenate: step 1/5. In terms of biological role, catalyzes the phosphorylation of pantothenate (Pan), the first step in CoA biosynthesis. The protein is Type III pantothenate kinase of Cupriavidus taiwanensis (strain DSM 17343 / BCRC 17206 / CCUG 44338 / CIP 107171 / LMG 19424 / R1) (Ralstonia taiwanensis (strain LMG 19424)).